A 368-amino-acid chain; its full sequence is Methionine import ATP-binding protein MetN (368 aa).

In terms of domain architecture, ABC transporter spans 5 to 260; the sequence is IELNNLSVQF…PKEALTKQFI (256 aa). 41-48 contacts ATP; it reads GYSGAGKS.

This sequence belongs to the ABC transporter superfamily. Methionine importer (TC 3.A.1.24) family. In terms of assembly, the complex is composed of two ATP-binding proteins (MetN), two transmembrane proteins (MetI) and a solute-binding protein (MetQ).

The protein resides in the cell membrane. The enzyme catalyses L-methionine(out) + ATP + H2O = L-methionine(in) + ADP + phosphate + H(+). It catalyses the reaction D-methionine(out) + ATP + H2O = D-methionine(in) + ADP + phosphate + H(+). Part of the ABC transporter complex MetNIQ involved in methionine import. Responsible for energy coupling to the transport system. The protein is Methionine import ATP-binding protein MetN of Lactococcus lactis subsp. lactis (strain IL1403) (Streptococcus lactis).